The sequence spans 110 residues: uncharacterized protein (110 aa).

Positions 1 to 23 (MKRITINIITMFIAAAVISLTGT) are cleaved as a signal peptide.

This is an uncharacterized protein from Bacillus subtilis (strain 168).